We begin with the raw amino-acid sequence, 156 residues long: Peroxisome assembly protein 22 (156 aa).

The chain crosses the membrane as a helical span at residues 24–46 (LSIIAVGVLSTVAVTVGYLLYLY).

It belongs to the peroxin-22 family.

The protein resides in the peroxisome membrane. Involved in peroxisome biogenesis. This is Peroxisome assembly protein 22 (PEX22) from Kluyveromyces lactis (strain ATCC 8585 / CBS 2359 / DSM 70799 / NBRC 1267 / NRRL Y-1140 / WM37) (Yeast).